A 241-amino-acid polypeptide reads, in one-letter code: Probable septum site-determining protein MinC (241 aa).

A disordered region spans residues 109–135 (PSGARERKVDPSSKTPAKPAEPTYRPT).

This sequence belongs to the MinC family. In terms of assembly, interacts with MinD and FtsZ.

Cell division inhibitor that blocks the formation of polar Z ring septums. Rapidly oscillates between the poles of the cell to destabilize FtsZ filaments that have formed before they mature into polar Z rings. Prevents FtsZ polymerization. This Stutzerimonas stutzeri (strain A1501) (Pseudomonas stutzeri) protein is Probable septum site-determining protein MinC.